We begin with the raw amino-acid sequence, 200 residues long: Cytochrome c biogenesis ATP-binding export protein CcmA (200 aa).

Residues 2-200 (LDVIELDFDY…NKADYEEYHL (199 aa)) enclose the ABC transporter domain. Position 34 to 41 (34 to 41 (GSNGAGKT)) interacts with ATP.

This sequence belongs to the ABC transporter superfamily. CcmA exporter (TC 3.A.1.107) family. The complex is composed of two ATP-binding proteins (CcmA) and two transmembrane proteins (CcmB).

The protein localises to the cell inner membrane. It catalyses the reaction heme b(in) + ATP + H2O = heme b(out) + ADP + phosphate + H(+). Part of the ABC transporter complex CcmAB involved in the biogenesis of c-type cytochromes; once thought to export heme, this seems not to be the case, but its exact role is uncertain. Responsible for energy coupling to the transport system. This chain is Cytochrome c biogenesis ATP-binding export protein CcmA, found in Legionella pneumophila.